Here is a 292-residue protein sequence, read N- to C-terminus: Protease HtpX (292 aa).

2 helical membrane-spanning segments follow: residues 4–24 (IALF…VLSL) and 34–54 (GLMI…LLMS). Residue His139 participates in Zn(2+) binding. The active site involves Glu140. His143 is a Zn(2+) binding site. 2 helical membrane passes run 158 to 178 (IVNT…AGFL) and 192 to 212 (MIYF…ASII). Glu221 is a binding site for Zn(2+).

Belongs to the peptidase M48B family. Requires Zn(2+) as cofactor.

Its subcellular location is the cell inner membrane. This chain is Protease HtpX, found in Serratia proteamaculans (strain 568).